The primary structure comprises 190 residues: Probable DNA replication complex GINS protein PSF2 (190 aa).

The protein belongs to the GINS2/PSF2 family. Component of the GINS complex which is a heterotetramer of gins1, gins2, gins3 and gins4.

The protein localises to the nucleus. Its function is as follows. The GINS complex plays an essential role in the initiation of DNA replication. The chain is Probable DNA replication complex GINS protein PSF2 from Brugia malayi (Filarial nematode worm).